Here is a 62-residue protein sequence, read N- to C-terminus: UPF0434 protein SPO3421 (62 aa).

The protein belongs to the UPF0434 family.

This Ruegeria pomeroyi (strain ATCC 700808 / DSM 15171 / DSS-3) (Silicibacter pomeroyi) protein is UPF0434 protein SPO3421.